Reading from the N-terminus, the 304-residue chain is Glutamyl-Q tRNA(Asp) synthetase (304 aa).

Residues 14–18 (RFAPS) and glutamate 50 contribute to the L-glutamate site. The 'HIGH' region motif lies at 17 to 27 (PSPSGPLHFGS). Zn(2+) contacts are provided by cysteine 106, cysteine 108, tyrosine 120, and cysteine 124. 2 residues coordinate L-glutamate: tyrosine 178 and arginine 196. The 'KMSKS' region motif lies at 234–238 (KLSKQ). Lysine 237 serves as a coordination point for ATP.

This sequence belongs to the class-I aminoacyl-tRNA synthetase family. GluQ subfamily. It depends on Zn(2+) as a cofactor.

Catalyzes the tRNA-independent activation of glutamate in presence of ATP and the subsequent transfer of glutamate onto a tRNA(Asp). Glutamate is transferred on the 2-amino-5-(4,5-dihydroxy-2-cyclopenten-1-yl) moiety of the queuosine in the wobble position of the QUC anticodon. In Vibrio cholerae serotype O1 (strain ATCC 39315 / El Tor Inaba N16961), this protein is Glutamyl-Q tRNA(Asp) synthetase.